A 221-amino-acid chain; its full sequence is Thiamine-phosphate synthase (221 aa).

Residues 47-51 (QYREK) and N79 each bind 4-amino-2-methyl-5-(diphosphooxymethyl)pyrimidine. Mg(2+)-binding residues include D80 and D99. Residue T118 participates in 4-amino-2-methyl-5-(diphosphooxymethyl)pyrimidine binding. Residue 144–146 (SFT) coordinates 2-[(2R,5Z)-2-carboxy-4-methylthiazol-5(2H)-ylidene]ethyl phosphate. K147 contacts 4-amino-2-methyl-5-(diphosphooxymethyl)pyrimidine. Residues G175 and 195-196 (VT) contribute to the 2-[(2R,5Z)-2-carboxy-4-methylthiazol-5(2H)-ylidene]ethyl phosphate site.

This sequence belongs to the thiamine-phosphate synthase family. It depends on Mg(2+) as a cofactor.

The enzyme catalyses 2-[(2R,5Z)-2-carboxy-4-methylthiazol-5(2H)-ylidene]ethyl phosphate + 4-amino-2-methyl-5-(diphosphooxymethyl)pyrimidine + 2 H(+) = thiamine phosphate + CO2 + diphosphate. It carries out the reaction 2-(2-carboxy-4-methylthiazol-5-yl)ethyl phosphate + 4-amino-2-methyl-5-(diphosphooxymethyl)pyrimidine + 2 H(+) = thiamine phosphate + CO2 + diphosphate. The catalysed reaction is 4-methyl-5-(2-phosphooxyethyl)-thiazole + 4-amino-2-methyl-5-(diphosphooxymethyl)pyrimidine + H(+) = thiamine phosphate + diphosphate. It functions in the pathway cofactor biosynthesis; thiamine diphosphate biosynthesis; thiamine phosphate from 4-amino-2-methyl-5-diphosphomethylpyrimidine and 4-methyl-5-(2-phosphoethyl)-thiazole: step 1/1. Its function is as follows. Condenses 4-methyl-5-(beta-hydroxyethyl)thiazole monophosphate (THZ-P) and 2-methyl-4-amino-5-hydroxymethyl pyrimidine pyrophosphate (HMP-PP) to form thiamine monophosphate (TMP). This Caldicellulosiruptor saccharolyticus (strain ATCC 43494 / DSM 8903 / Tp8T 6331) protein is Thiamine-phosphate synthase.